A 146-amino-acid chain; its full sequence is Globin-2B (146 aa).

In terms of domain architecture, Globin spans 9–146 (QLTADVKKDL…KLVGVVQAAL (138 aa)). His101 is a binding site for heme b.

Belongs to the globin family. Homodimer.

The chain is Globin-2B from Anadara trapezia (Sydney cockle).